Reading from the N-terminus, the 72-residue chain is Translation initiation factor IF-1 (72 aa).

In terms of domain architecture, S1-like spans 1 to 72 (MAKDDVIEID…DKGRITYRYK (72 aa)).

It belongs to the IF-1 family. In terms of assembly, component of the 30S ribosomal translation pre-initiation complex which assembles on the 30S ribosome in the order IF-2 and IF-3, IF-1 and N-formylmethionyl-tRNA(fMet); mRNA recruitment can occur at any time during PIC assembly.

It is found in the cytoplasm. One of the essential components for the initiation of protein synthesis. Stabilizes the binding of IF-2 and IF-3 on the 30S subunit to which N-formylmethionyl-tRNA(fMet) subsequently binds. Helps modulate mRNA selection, yielding the 30S pre-initiation complex (PIC). Upon addition of the 50S ribosomal subunit IF-1, IF-2 and IF-3 are released leaving the mature 70S translation initiation complex. The chain is Translation initiation factor IF-1 from Campylobacter fetus subsp. fetus (strain 82-40).